The chain runs to 340 residues: MVEQITDKLGRPIRDLRLSVTDRCNFRCDYCMPKEIFGDDFVFLPKDELLTFDEMVRIAQVYTQLGVKKIRITGGEPLLRRDLDKLIYQLNQLEGVEDIGLTTNGLLLKKHGQKLYDAGLRRINVSLDAIDDAVFQAINNRNIKASTILQQIDYAVAIGFQVKVNVVVQKGVNDDQIVPMVQYFKDKDVQIRFIEFMDVGNDNGWDFSKVVSKDEMLEMIEQNFDIEPVAPKYYGEVAKYYQHKDNKAQFGLITSVSQSFCSTCTRARLSSDGKFYGCLFSTVDGFNVKSFMRNGATDNELFEQFKALWNIRDDRYSDERTEQTVANRKRKKINMNYIGG.

A Radical SAM core domain is found at 8-227 (KLGRPIRDLR…EMIEQNFDIE (220 aa)). R17 lines the GTP pocket. The [4Fe-4S] cluster site is built by C24 and C28. Y30 provides a ligand contact to S-adenosyl-L-methionine. C31 provides a ligand contact to [4Fe-4S] cluster. R71 serves as a coordination point for GTP. Position 75 (G75) interacts with S-adenosyl-L-methionine. T102 is a GTP binding site. S126 is a binding site for S-adenosyl-L-methionine. K163 contacts GTP. M197 serves as a coordination point for S-adenosyl-L-methionine. 2 residues coordinate [4Fe-4S] cluster: C261 and C264. A GTP-binding site is contributed by 266-268 (RAR). [4Fe-4S] cluster is bound at residue C278.

Belongs to the radical SAM superfamily. MoaA family. Monomer and homodimer. Requires [4Fe-4S] cluster as cofactor.

The enzyme catalyses GTP + AH2 + S-adenosyl-L-methionine = (8S)-3',8-cyclo-7,8-dihydroguanosine 5'-triphosphate + 5'-deoxyadenosine + L-methionine + A + H(+). It participates in cofactor biosynthesis; molybdopterin biosynthesis. Its function is as follows. Catalyzes the cyclization of GTP to (8S)-3',8-cyclo-7,8-dihydroguanosine 5'-triphosphate. This is GTP 3',8-cyclase from Staphylococcus saprophyticus subsp. saprophyticus (strain ATCC 15305 / DSM 20229 / NCIMB 8711 / NCTC 7292 / S-41).